A 1326-amino-acid chain; its full sequence is F-box/WD repeat-containing protein 7 (1326 aa).

Disordered stretches follow at residues 1–58 (MERG…AEVG), 123–187 (DSSS…IEDE), 318–351 (TVSNPSPAASANAAAPEEASTSNSSSTSSSALSR), 399–549 (GSKA…SGCS), 615–642 (RSNPPAASGAGSVGANPTASVRQRRNGS), and 797–843 (TPRS…NPPP). Residues 9–39 (SSESVTSAGERTQSAVTSSTSTWVKSQASTS) show a composition bias toward polar residues. A compositionally biased stretch (acidic residues) spans 165 to 187 (NDDDDDEEPEPEEDDEEELIEDE). Low complexity predominate over residues 320–348 (SNPSPAASANAAAPEEASTSNSSSTSSSA). Residues 403 to 464 (ANGSGTANSD…KLNLGSSLGA (62 aa)) show a composition bias toward polar residues. Over residues 465-486 (SSCSQHRSGSSSTSKSMESSTS) the composition is skewed to low complexity. A compositionally biased stretch (polar residues) spans 495 to 504 (VYTNTNSNDY). 3 stretches are compositionally biased toward low complexity: residues 510–520 (TTSGSSTSGGS), 528–546 (NVSASVSYSSVGSQTSQES), and 616–631 (SNPPAASGAGSVGANP). Composition is skewed to polar residues over residues 632-642 (TASVRQRRNGS) and 797-824 (TPRSSQHLGPTAVLSVTPSSHLTSSTPG). The residue at position 813 (threonine 813) is a Phosphothreonine. Position 825 is a phosphoserine (serine 825). Residues 889–935 (RDFISLLPRELALFVLSYLEPKDLLRAAQTCRSWRFLCDDNLLWKEK) enclose the F-box domain. 7 WD repeats span residues 992–1030 (GHDDHVITCLQFSGNRIVSGSDDNTLKVWSAVNGKCLRT), 1033–1070 (GHTGGVWSSQMSGNIIISGSTDRTLKVWDMDSGACVHT), 1073–1110 (GHTSTVRCMHLHGSKVVSGSRDATLRVWDIEQGSCLHV), 1113–1150 (GHLAAVRCVQYDGKLIVSGAYDYMVKIWHPERQECLHT), 1153–1190 (GHTNRVYSLQFDGLHVVSGSLDTSIRVWDVETGNCKHT), 1193–1232 (GHQSLTSGMELRQNILVSGNADSTVKVWDITTGQCLQTLS), and 1236–1273 (KHHSAVTCLQFNSRFVVTSSDDGTVKLWDVKTGDFIRN).

In terms of assembly, part of a SCF E3 ubiquitin-protein ligase complex. Interacts with Myc and puf. Interacts with CycE. Expressed in follicle cell epithelium and imaginal disks, particularly in the morphogenetic furrow.

Its subcellular location is the nucleus. It participates in protein modification; protein ubiquitination. Substrate recognition component of a SCF (SKP1-CUL1-F-box protein) E3 ubiquitin-protein ligase complex which mediates the ubiquitination and subsequent proteasomal degradation of target proteins. Probably recognizes and binds to phosphorylated target proteins. In the wing and eye, negatively regulates cell growth and proliferation by mediating the degradation of Myc and cyclin E, respectively. Required for endocycles, but not mitosis in follicle cell epithelium. The chain is F-box/WD repeat-containing protein 7 from Drosophila melanogaster (Fruit fly).